We begin with the raw amino-acid sequence, 310 residues long: HPr kinase/phosphorylase (310 aa).

Active-site residues include H138 and K159. An ATP-binding site is contributed by 153 to 160; that stretch reads GASGIGKS. S160 is a Mg(2+) binding site. The Proton acceptor; for phosphorylation activity. Proton donor; for dephosphorylation activity role is filled by D177. The important for the catalytic mechanism of both phosphorylation and dephosphorylation stretch occupies residues 201-210; that stretch reads IEIRGVGIID. E202 is a binding site for Mg(2+). R243 is an active-site residue. An important for the catalytic mechanism of dephosphorylation region spans residues 264-269; that stretch reads PVKTGR.

Belongs to the HPrK/P family. As to quaternary structure, homohexamer. It depends on Mg(2+) as a cofactor.

It carries out the reaction [HPr protein]-L-serine + ATP = [HPr protein]-O-phospho-L-serine + ADP + H(+). The catalysed reaction is [HPr protein]-O-phospho-L-serine + phosphate + H(+) = [HPr protein]-L-serine + diphosphate. Catalyzes the ATP- as well as the pyrophosphate-dependent phosphorylation of a specific serine residue in HPr, a phosphocarrier protein of the phosphoenolpyruvate-dependent sugar phosphotransferase system (PTS). HprK/P also catalyzes the pyrophosphate-producing, inorganic phosphate-dependent dephosphorylation (phosphorolysis) of seryl-phosphorylated HPr (P-Ser-HPr). The two antagonistic activities of HprK/P are regulated by several intracellular metabolites, which change their concentration in response to the absence or presence of rapidly metabolisable carbon sources (glucose, fructose, etc.) in the growth medium. Therefore, by controlling the phosphorylation state of HPr, HPrK/P is a sensor enzyme that plays a major role in the regulation of carbon metabolism and sugar transport: it mediates carbon catabolite repression (CCR), and regulates PTS-catalyzed carbohydrate uptake and inducer exclusion. The protein is HPr kinase/phosphorylase of Lactococcus lactis subsp. cremoris (strain SK11).